Here is a 391-residue protein sequence, read N- to C-terminus: Histidinol-phosphate aminotransferase (391 aa).

Lys-246 is modified (N6-(pyridoxal phosphate)lysine).

This sequence belongs to the class-II pyridoxal-phosphate-dependent aminotransferase family. Histidinol-phosphate aminotransferase subfamily. Pyridoxal 5'-phosphate serves as cofactor.

It catalyses the reaction L-histidinol phosphate + 2-oxoglutarate = 3-(imidazol-4-yl)-2-oxopropyl phosphate + L-glutamate. It participates in amino-acid biosynthesis; L-histidine biosynthesis; L-histidine from 5-phospho-alpha-D-ribose 1-diphosphate: step 7/9. The sequence is that of Histidinol-phosphate aminotransferase from Methanopyrus kandleri (strain AV19 / DSM 6324 / JCM 9639 / NBRC 100938).